The primary structure comprises 245 residues: 1-(5-phosphoribosyl)-5-[(5-phosphoribosylamino)methylideneamino] imidazole-4-carboxamide isomerase (245 aa).

Residue D7 is the Proton acceptor of the active site. The Proton donor role is filled by D129.

It belongs to the HisA/HisF family.

It is found in the cytoplasm. It carries out the reaction 1-(5-phospho-beta-D-ribosyl)-5-[(5-phospho-beta-D-ribosylamino)methylideneamino]imidazole-4-carboxamide = 5-[(5-phospho-1-deoxy-D-ribulos-1-ylimino)methylamino]-1-(5-phospho-beta-D-ribosyl)imidazole-4-carboxamide. It participates in amino-acid biosynthesis; L-histidine biosynthesis; L-histidine from 5-phospho-alpha-D-ribose 1-diphosphate: step 4/9. The chain is 1-(5-phosphoribosyl)-5-[(5-phosphoribosylamino)methylideneamino] imidazole-4-carboxamide isomerase from Buchnera aphidicola subsp. Cinara cedri (strain Cc).